Here is a 189-residue protein sequence, read N- to C-terminus: Elongation factor P (189 aa).

The protein belongs to the elongation factor P family.

The protein localises to the cytoplasm. Its pathway is protein biosynthesis; polypeptide chain elongation. Involved in peptide bond synthesis. Stimulates efficient translation and peptide-bond synthesis on native or reconstituted 70S ribosomes in vitro. Probably functions indirectly by altering the affinity of the ribosome for aminoacyl-tRNA, thus increasing their reactivity as acceptors for peptidyl transferase. This is Elongation factor P from Onion yellows phytoplasma (strain OY-M).